A 962-amino-acid polypeptide reads, in one-letter code: Putative primase C962R (962 aa).

The SF3 helicase domain maps to 607-775; sequence ELDARLWIMF…PDPGNPYEKK (169 aa). 636-643 contacts ATP; sequence GGGCNGKT.

The protein belongs to the asfivirus helicase C962R family.

In African swine fever virus (strain Badajoz 1971 Vero-adapted) (Ba71V), this protein is Putative primase C962R.